We begin with the raw amino-acid sequence, 303 residues long: tRNA dimethylallyltransferase (303 aa).

10 to 17 contacts ATP; it reads GPTASGKS. Residue 12–17 participates in substrate binding; the sequence is TASGKS. The segment at 35-38 is interaction with substrate tRNA; it reads DSMQ.

This sequence belongs to the IPP transferase family. As to quaternary structure, monomer. Mg(2+) is required as a cofactor.

The enzyme catalyses adenosine(37) in tRNA + dimethylallyl diphosphate = N(6)-dimethylallyladenosine(37) in tRNA + diphosphate. Its function is as follows. Catalyzes the transfer of a dimethylallyl group onto the adenine at position 37 in tRNAs that read codons beginning with uridine, leading to the formation of N6-(dimethylallyl)adenosine (i(6)A). In Methylobacterium nodulans (strain LMG 21967 / CNCM I-2342 / ORS 2060), this protein is tRNA dimethylallyltransferase.